We begin with the raw amino-acid sequence, 560 residues long: Putative protease Do-like 11, mitochondrial (560 aa).

A mitochondrion-targeting transit peptide spans Met1–Arg65. The interval Thr117–Ser302 is serine protease. Catalysis depends on charge relay system residues His150, Asp184, and Ser258. The 97-residue stretch at Ile288–Glu384 folds into the PDZ domain.

This sequence belongs to the peptidase S1C family.

Its subcellular location is the mitochondrion membrane. Its function is as follows. Putative serine protease. The protein is Putative protease Do-like 11, mitochondrial (DEGP11) of Arabidopsis thaliana (Mouse-ear cress).